Reading from the N-terminus, the 143-residue chain is Transcriptional regulator MraZ (143 aa).

SpoVT-AbrB domains lie at Ser-5–Glu-47 and Ala-76–Arg-119.

The protein belongs to the MraZ family. As to quaternary structure, forms oligomers.

The protein resides in the cytoplasm. The protein localises to the nucleoid. In Parafrankia sp. (strain EAN1pec), this protein is Transcriptional regulator MraZ.